Consider the following 534-residue polypeptide: CTP synthase (534 aa).

The segment at M1 to L267 is amidoligase domain. S13 provides a ligand contact to CTP. S13 contributes to the UTP binding site. S14–I19 serves as a coordination point for ATP. An L-glutamine-binding site is contributed by Y54. D71 is an ATP binding site. The Mg(2+) site is built by D71 and E141. CTP-binding positions include D148–E150, K188–Q193, and K224. Residues K188–Q193 and K224 each bind UTP. Positions T292–E534 constitute a Glutamine amidotransferase type-1 domain. G354 contributes to the L-glutamine binding site. C381 functions as the Nucleophile; for glutamine hydrolysis in the catalytic mechanism. Residues L382–Q385, E405, and R462 contribute to the L-glutamine site. Residues H507 and E509 contribute to the active site.

It belongs to the CTP synthase family. In terms of assembly, homotetramer.

The catalysed reaction is UTP + L-glutamine + ATP + H2O = CTP + L-glutamate + ADP + phosphate + 2 H(+). It catalyses the reaction L-glutamine + H2O = L-glutamate + NH4(+). The enzyme catalyses UTP + NH4(+) + ATP = CTP + ADP + phosphate + 2 H(+). It participates in pyrimidine metabolism; CTP biosynthesis via de novo pathway; CTP from UDP: step 2/2. With respect to regulation, allosterically activated by GTP, when glutamine is the substrate; GTP has no effect on the reaction when ammonia is the substrate. The allosteric effector GTP functions by stabilizing the protein conformation that binds the tetrahedral intermediate(s) formed during glutamine hydrolysis. Inhibited by the product CTP, via allosteric rather than competitive inhibition. Catalyzes the ATP-dependent amination of UTP to CTP with either L-glutamine or ammonia as the source of nitrogen. Regulates intracellular CTP levels through interactions with the four ribonucleotide triphosphates. This Herpetosiphon aurantiacus (strain ATCC 23779 / DSM 785 / 114-95) protein is CTP synthase.